The primary structure comprises 681 residues: Long-chain-fatty-acid--CoA ligase heimdall (681 aa).

Residues 223 to 231 (TSGTVGMPK), 414 to 419 (ECYGMS), aspartate 491, arginine 506, and lysine 639 each bind ATP.

This sequence belongs to the ATP-dependent AMP-binding enzyme family. Bubblegum subfamily.

The enzyme catalyses a long-chain fatty acid + ATP + CoA = a long-chain fatty acyl-CoA + AMP + diphosphate. Mediates activation of long-chain fatty acids for both synthesis of cellular lipids, and degradation via beta-oxidation. Probably by regulating lipid storage and catabolism, plays a role in neuronal function. The chain is Long-chain-fatty-acid--CoA ligase heimdall from Drosophila melanogaster (Fruit fly).